The sequence spans 706 residues: Polyribonucleotide nucleotidyltransferase (706 aa).

Residues Asp-486 and Asp-492 each contribute to the Mg(2+) site. Residues 553–612 (PRIHTIKISTDKIKDVIGKGGSVIRALTEETGTTIEIEDDGTVRIASTDGEKAKHAIRRI) form the KH domain. The S1 motif domain occupies 622-690 (GRVYQGKVTR…RQGRVRLSIK (69 aa)).

This sequence belongs to the polyribonucleotide nucleotidyltransferase family. In terms of assembly, component of the RNA degradosome, which is a multiprotein complex involved in RNA processing and mRNA degradation. Mg(2+) serves as cofactor.

The protein resides in the cytoplasm. It catalyses the reaction RNA(n+1) + phosphate = RNA(n) + a ribonucleoside 5'-diphosphate. Its function is as follows. Involved in mRNA degradation. Catalyzes the phosphorolysis of single-stranded polyribonucleotides processively in the 3'- to 5'-direction. The polypeptide is Polyribonucleotide nucleotidyltransferase (Pectobacterium atrosepticum (strain SCRI 1043 / ATCC BAA-672) (Erwinia carotovora subsp. atroseptica)).